Reading from the N-terminus, the 299-residue chain is MVTFLHIFFSILILVLFVLGNFANGFIALVNFIDLVKRKKISSADQILTALAVSRIGLLWALLLNWYLTVLNPAFYSVELRITSYNAWVVTNHFSMWLAASLSIFYLLKIANFSNLIFLHLKRRVRSVILVILLGPLTFLVCHLFVANMDESMSAEEYEGNMTGKLKLRNTVHLSYLTVTTLWSFIPFTLSLISFLMLICSLCKHVKKMQLHGEGSQDLSTKVHIKALQTLISFLLLCAIFFLFLIISIWNPRRLQNDPVVVVSKAVGNIYLALDSFILIWRTKKLKHTFLLILCQIRC.

Position 1 (methionine 1) is a topological domain, extracellular. A helical membrane pass occupies residues 2-22 (VTFLHIFFSILILVLFVLGNF). At 23 to 55 (ANGFIALVNFIDLVKRKKISSADQILTALAVSR) the chain is on the cytoplasmic side. A helical transmembrane segment spans residues 56–76 (IGLLWALLLNWYLTVLNPAFY). Over 77 to 87 (SVELRITSYNA) the chain is Extracellular. The chain crosses the membrane as a helical span at residues 88–108 (WVVTNHFSMWLAASLSIFYLL). At 109–126 (KIANFSNLIFLHLKRRVR) the chain is on the cytoplasmic side. A helical transmembrane segment spans residues 127-147 (SVILVILLGPLTFLVCHLFVA). The Extracellular segment spans residues 148–181 (NMDESMSAEEYEGNMTGKLKLRNTVHLSYLTVTT). The N-linked (GlcNAc...) asparagine glycan is linked to asparagine 161. Residues 182 to 202 (LWSFIPFTLSLISFLMLICSL) form a helical membrane-spanning segment. Topologically, residues 203-229 (CKHVKKMQLHGEGSQDLSTKVHIKALQ) are cytoplasmic. The helical transmembrane segment at 230-250 (TLISFLLLCAIFFLFLIISIW) threads the bilayer. The Extracellular segment spans residues 251 to 259 (NPRRLQNDP). A helical membrane pass occupies residues 260–280 (VVVVSKAVGNIYLALDSFILI). Topologically, residues 281–299 (WRTKKLKHTFLLILCQIRC) are cytoplasmic.

The protein belongs to the G-protein coupled receptor T2R family.

The protein resides in the membrane. Functionally, receptor that may play a role in the perception of bitterness and is gustducin-linked. May play a role in sensing the chemical composition of the gastrointestinal content. The activity of this receptor may stimulate alpha gustducin, mediate PLC-beta-2 activation and lead to the gating of TRPM5. This chain is Taste receptor type 2 member 50 (TAS2R50), found in Pongo pygmaeus (Bornean orangutan).